A 198-amino-acid chain; its full sequence is Na(+)-translocating NADH-quinone reductase subunit E (198 aa).

Transmembrane regions (helical) follow at residues serine 11–valine 31, phenylalanine 39–valine 59, phenylalanine 77–isoleucine 97, glycine 110–valine 130, isoleucine 140–isoleucine 160, and leucine 176–valine 196.

Belongs to the NqrDE/RnfAE family. In terms of assembly, composed of six subunits; NqrA, NqrB, NqrC, NqrD, NqrE and NqrF.

It is found in the cell inner membrane. The catalysed reaction is a ubiquinone + n Na(+)(in) + NADH + H(+) = a ubiquinol + n Na(+)(out) + NAD(+). Functionally, NQR complex catalyzes the reduction of ubiquinone-1 to ubiquinol by two successive reactions, coupled with the transport of Na(+) ions from the cytoplasm to the periplasm. NqrA to NqrE are probably involved in the second step, the conversion of ubisemiquinone to ubiquinol. The protein is Na(+)-translocating NADH-quinone reductase subunit E of Photobacterium profundum (strain SS9).